We begin with the raw amino-acid sequence, 155 residues long: Interleukin-2 (155 aa).

The N-terminal stretch at 1-20 is a signal peptide; that stretch reads MYKMQLVACIALSLVLITNS. O-linked (GalNAc...) threonine glycosylation is present at Thr-23. A disulfide bond links Cys-77 and Cys-125.

It belongs to the IL-2 family.

The protein localises to the secreted. Cytokine produced by activated CD4-positive helper T-cells and to a lesser extend activated CD8-positive T-cells and natural killer (NK) cells that plays pivotal roles in the immune response and tolerance. Binds to a receptor complex composed of either the high-affinity trimeric IL-2R (IL2RA/CD25, IL2RB/CD122 and IL2RG/CD132) or the low-affinity dimeric IL-2R (IL2RB and IL2RG). Interaction with the receptor leads to oligomerization and conformation changes in the IL-2R subunits resulting in downstream signaling starting with phosphorylation of JAK1 and JAK3. In turn, JAK1 and JAK3 phosphorylate the receptor to form a docking site leading to the phosphorylation of several substrates including STAT5. This process leads to activation of several pathways including STAT, phosphoinositide-3-kinase/PI3K and mitogen-activated protein kinase/MAPK pathways. Functions as a T-cell growth factor and can increase NK-cell cytolytic activity as well. Promotes strong proliferation of activated B-cells and subsequently immunoglobulin production. Plays a pivotal role in regulating the adaptive immune system by controlling the survival and proliferation of regulatory T-cells, which are required for the maintenance of immune tolerance. Moreover, participates in the differentiation and homeostasis of effector T-cell subsets, including Th1, Th2, Th17 as well as memory CD8-positive T-cells. This is Interleukin-2 (IL2) from Dasypus novemcinctus (Nine-banded armadillo).